The sequence spans 532 residues: Bifunctional purine biosynthesis protein PurH (532 aa).

The MGS-like domain occupies 1–147 (MAKIKRALIS…KNYRSVTVVT (147 aa)).

This sequence belongs to the PurH family.

The catalysed reaction is (6R)-10-formyltetrahydrofolate + 5-amino-1-(5-phospho-beta-D-ribosyl)imidazole-4-carboxamide = 5-formamido-1-(5-phospho-D-ribosyl)imidazole-4-carboxamide + (6S)-5,6,7,8-tetrahydrofolate. It carries out the reaction IMP + H2O = 5-formamido-1-(5-phospho-D-ribosyl)imidazole-4-carboxamide. It functions in the pathway purine metabolism; IMP biosynthesis via de novo pathway; 5-formamido-1-(5-phospho-D-ribosyl)imidazole-4-carboxamide from 5-amino-1-(5-phospho-D-ribosyl)imidazole-4-carboxamide (10-formyl THF route): step 1/1. Its pathway is purine metabolism; IMP biosynthesis via de novo pathway; IMP from 5-formamido-1-(5-phospho-D-ribosyl)imidazole-4-carboxamide: step 1/1. The sequence is that of Bifunctional purine biosynthesis protein PurH from Magnetococcus marinus (strain ATCC BAA-1437 / JCM 17883 / MC-1).